The sequence spans 216 residues: 1-Cys peroxiredoxin PER1 (216 aa).

Residues 4 to 159 (ITLGDTVPNL…VLRALDSLLM (156 aa)) enclose the Thioredoxin domain. The active-site Cysteine sulfenic acid (-SOH) intermediate is the Cys-46. The Bipartite nuclear localization signal signature appears at 191–214 (KKMFPQGFKTADLPSKKGYLRHTE).

This sequence belongs to the peroxiredoxin family. Prx6 subfamily. Predominantly expressed in seed. Expressed in endosperm, embryo and aleurone cells. Also detected in young seedlings, abscission zones, stem branching points.

The protein resides in the nucleus. The protein localises to the cytoplasm. The catalysed reaction is a hydroperoxide + [thioredoxin]-dithiol = an alcohol + [thioredoxin]-disulfide + H2O. In terms of biological role, thiol-specific peroxidase that catalyzes the reduction of hydrogen peroxide and organic hydroperoxides to water and alcohols, respectively. Seems to contribute to the inhibition of germination during stress. In Arabidopsis thaliana (Mouse-ear cress), this protein is 1-Cys peroxiredoxin PER1 (PER1).